Consider the following 502-residue polypeptide: MDGGGEHSEALKNYYLGKILGVGTFAKVIIAEHKHTRHKVAIKVLNRRQMRAPEMEEKAKREIKILRLFIDLIHPHIIRVYEVIVTPKDIFVVMEYCQNGDLLDYILEKRRLQEDEARRTFQQIISAVEYCHRNKVVHRDLKPENLLLDSKYNVKLADFGLSNVMHDGHFLKTSCGSLNYAAPEVISGKLYAGPEIDVWSCGVILYALLCGAVPFDDDNIPNLFKKIKGGTYILPIYLSDLVRDLISRMLIVDPMKRITIGEIRKHSWFQNRLPRYLAVPPPDMMQQAKMIDEDTLRDVVKLGYDKDHVCESLCNRLQNEETVAYYLLLDNRFRATSGYLGAHYQQPMESASPSTRSYLPGSNDSQGSGLRPYYRVERKWALGLQQSRAPPRAIMIEVLKALKELNVCWKKNGDCYNMKCRWCPGFPRVSDMLLDANHSFVDDCAIKDNGDANSRLPAVIKFEIQLYKTKDDKYLLDMQRVTGPQLLFLEFCAAFLTNLRVL.

The Protein kinase domain occupies 14 to 269; it reads YYLGKILGVG…IGEIRKHSWF (256 aa). Residues 20–28 and K43 contribute to the ATP site; that span reads LGVGTFAKV. Catalysis depends on D140, which acts as the Proton acceptor. T173 is modified (phosphothreonine; by autocatalysis). Residues 290 to 330 enclose the UBA domain; the sequence is MIDEDTLRDVVKLGYDKDHVCESLCNRLQNEETVAYYLLLD. The region spanning 453 to 501 is the KA1 domain; that stretch reads NSRLPAVIKFEIQLYKTKDDKYLLDMQRVTGPQLLFLEFCAAFLTNLRV.

It belongs to the protein kinase superfamily. CAMK Ser/Thr protein kinase family. SNF1 subfamily.

It carries out the reaction L-seryl-[protein] + ATP = O-phospho-L-seryl-[protein] + ADP + H(+). The catalysed reaction is L-threonyl-[protein] + ATP = O-phospho-L-threonyl-[protein] + ADP + H(+). Essential for release from glucose repression. The sequence is that of Carbon catabolite-derepressing protein kinase (RKIN1) from Secale cereale (Rye).